The following is a 197-amino-acid chain: MAVVPIRIVGDPVLHTATTPVTVAADGSLPADLAQLIATMYDTMDAANGVGLAANQIGCSLRLFVYDCAADRAMTARRRGVVINPVLETSEIPETMPDPDTDDEGCLSVPGESFPTGRAKWARVTGLDADGSPVSIEGTGLFARMLQHETGHLDGFLYLDRLIGRYARNAKRAVKSHGWGVPGLSWLPGEDPDPFGH.

Residues C106 and H148 each contribute to the Fe cation site. Residue E149 is part of the active site. H152 is a binding site for Fe cation.

The protein belongs to the polypeptide deformylase family. Requires Fe(2+) as cofactor.

It catalyses the reaction N-terminal N-formyl-L-methionyl-[peptide] + H2O = N-terminal L-methionyl-[peptide] + formate. In terms of biological role, removes the formyl group from the N-terminal Met of newly synthesized proteins. Requires at least a dipeptide for an efficient rate of reaction. N-terminal L-methionine is a prerequisite for activity but the enzyme has broad specificity at other positions. This Mycobacterium tuberculosis (strain ATCC 25177 / H37Ra) protein is Peptide deformylase.